The primary structure comprises 940 residues: Isoleucine--tRNA ligase (940 aa).

The 'HIGH' region motif lies at 58-68; it reads PYANGSIHIGH. Position 564 (glutamate 564) interacts with L-isoleucyl-5'-AMP. The 'KMSKS' region motif lies at 605 to 609; the sequence is KMSKS. Lysine 608 contributes to the ATP binding site. Residues cysteine 903, cysteine 906, cysteine 923, and cysteine 926 each contribute to the Zn(2+) site.

It belongs to the class-I aminoacyl-tRNA synthetase family. IleS type 1 subfamily. As to quaternary structure, monomer. Requires Zn(2+) as cofactor.

It is found in the cytoplasm. The catalysed reaction is tRNA(Ile) + L-isoleucine + ATP = L-isoleucyl-tRNA(Ile) + AMP + diphosphate. Functionally, catalyzes the attachment of isoleucine to tRNA(Ile). As IleRS can inadvertently accommodate and process structurally similar amino acids such as valine, to avoid such errors it has two additional distinct tRNA(Ile)-dependent editing activities. One activity is designated as 'pretransfer' editing and involves the hydrolysis of activated Val-AMP. The other activity is designated 'posttransfer' editing and involves deacylation of mischarged Val-tRNA(Ile). In Shewanella baltica (strain OS185), this protein is Isoleucine--tRNA ligase.